The chain runs to 122 residues: uncharacterized protein (122 aa).

This is an uncharacterized protein from Homo sapiens (Human).